The primary structure comprises 887 residues: Beta-galactosidase 14 (887 aa).

Residues 1 to 31 (MSKSSRIRMKSRTRYLIAILLVISLCSKASS) form the signal peptide. Glu-197 functions as the Proton donor in the catalytic mechanism. The active-site Nucleophile is the Glu-268. Asn-269, Asn-300, Asn-395, and Asn-785 each carry an N-linked (GlcNAc...) asparagine glycan. An SUEL-type lectin domain is found at 752–838 (KDMRLKAVMR…KTLAVQVKCE (87 aa)). A compositionally biased stretch (basic and acidic residues) spans 838 to 852 (EKKEGKQDEKKKKED). Residues 838-887 (EKKEGKQDEKKKKEDKDEEEEDDEDDDEEEEEEDKENKDTKDMENKNQDM) are disordered. The span at 853-871 (KDEEEEDDEDDDEEEEEED) shows a compositional bias: acidic residues. Over residues 872–887 (KENKDTKDMENKNQDM) the composition is skewed to basic and acidic residues.

It belongs to the glycosyl hydrolase 35 family.

The protein resides in the secreted. It localises to the extracellular space. The protein localises to the apoplast. The enzyme catalyses Hydrolysis of terminal non-reducing beta-D-galactose residues in beta-D-galactosides.. This is Beta-galactosidase 14 (BGAL14) from Arabidopsis thaliana (Mouse-ear cress).